The following is a 650-amino-acid chain: Solute carrier family 23 member 2 (650 aa).

Over residues 1 to 20 the composition is skewed to polar residues; it reads MMGIGKNTTSKSMEAGSSTE. A disordered region spans residues 1–21; it reads MMGIGKNTTSKSMEAGSSTEG. Residues 9–110 are Cytoplasmic-facing; that stretch reads TSKSMEAGSS…LCIFLGLQHY (102 aa). A Phosphoserine modification is found at S70. T75 is modified (phosphothreonine). S78 bears the Phosphoserine mark. T79 bears the Phosphothreonine mark. A Phosphoserine modification is found at S81. The helical transmembrane segment at 111–131 threads the bilayer; it reads LTCFSGTIAVPFLLADAMCVG. Residues 132-139 lie on the Extracellular side of the membrane; that stretch reads YDQWATSQ. A helical membrane pass occupies residues 140-160; that stretch reads LIGTIFFCVGITTLLQTTFGC. Residue R161 is a topological domain, cytoplasmic. The helical transmembrane segment at 162–182 threads the bilayer; sequence LPLFQASAFAFLAPARAILSL. At 183 to 218 the chain is on the extracellular side; sequence DKWKCNTTDVSVANGTAELLHTEHIWYPRIREIQGA. Residues N188 and N196 are each glycosylated (N-linked (GlcNAc...) asparagine). The chain crosses the membrane as a helical span at residues 219 to 239; sequence IIMSSLIEVVIGLLGLPGALL. The Cytoplasmic segment spans residues 240–266; it reads KYIGPLTITPTVALIGLSGFQAAGERA. A helical membrane pass occupies residues 267–284; that stretch reads GKHWGIAMLTIFLVLLFS. The Extracellular segment spans residues 285–288; sequence QYAR. Positions 289 to 302 form an intramembrane region, helical; that stretch reads NVKFPLPIYKSKKG. Topologically, residues 303 to 309 are extracellular; sequence WTAYKLQ. Residues 310–330 form a helical membrane-spanning segment; sequence LFKMFPIILAILVSWLLCFIF. At 331 to 371 the chain is on the cytoplasmic side; sequence TVTDVFPPDSTKYGFYARTDARQGVLLVAPWFKVPYPFQWG. The chain crosses the membrane as a helical span at residues 372 to 392; the sequence is LPTVSAAGVIGMLSAVVASII. Residues 393–417 are Extracellular-facing; the sequence is ESIGDYYACARLSCAPPPPIHAINR. A helical membrane pass occupies residues 418-438; sequence GIFVEGLSCVLDGIFGTGNGS. Residues 439–461 lie on the Cytoplasmic side of the membrane; that stretch reads TSSSPNIGVLGITKVGSRRVIQC. Residues 462–482 traverse the membrane as a helical segment; it reads GAALMLALGMIGKFSALFASL. Over 483–485 the chain is Extracellular; that stretch reads PDP. The helical transmembrane segment at 486–506 threads the bilayer; sequence VLGALFCTLFGMITAVGLSNL. Over 507–516 the chain is Cytoplasmic; the sequence is QFIDLNSSRN. Residues 517-537 form a helical membrane-spanning segment; that stretch reads LFVLGFSIFFGLVLPSYLRQN. Topologically, residues 538–547 are extracellular; it reads PLVTGITGID. The chain crosses the membrane as a helical span at residues 548 to 568; it reads QVLNVLLTTAMFVGGCVAFIL. Residues 569–650 lie on the Cytoplasmic side of the membrane; the sequence is DNTIPGTPEE…SSDEDSQATG (82 aa). The residue at position 649 (T649) is a Phosphothreonine.

This sequence belongs to the nucleobase:cation symporter-2 (NCS2) (TC 2.A.40) family. In terms of assembly, interacts with CLSTN3. In terms of processing, phosphorylated. Ubiquitous.

The protein localises to the cell membrane. It catalyses the reaction L-ascorbate(out) + 2 Na(+)(out) = L-ascorbate(in) + 2 Na(+)(in). Sodium/ascorbate cotransporter. Mediates electrogenic uptake of vitamin C, with a stoichiometry of 2 Na(+) for each ascorbate. This chain is Solute carrier family 23 member 2 (SLC23A2), found in Homo sapiens (Human).